The primary structure comprises 228 residues: MARTFILWLHGLGDSGPANEPIQTQFKSSELSNASWLFPSAPFNPVTCNNGAVMRSWFDVPELPFKVGSPIDESSVLEAVKNVHAIIDQEIAEGTNPENVFICGLSQGGALTLASVLLYPKTLGGGAVLSGWVPFTSSIISQFPEEAKKTPILWSHGTDDRMVLFEAGQAALPFLKEAGVTCEFKAYPGLGHSISNKELKYIESWIKRRLKGSSSTCLQLNCLKEMFH.

Active-site charge relay system residues include Ser-106, Asp-160, and His-192.

Belongs to the AB hydrolase superfamily. AB hydrolase 2 family.

Its function is as follows. Possesses carboxylesterase activity in vitro with a preference for short acyl chain substrates. Functions as a negative regulator of the hypersensitive response (HR) triggered by the bacterial type III effector protein AvrBsT. Possesses phospholipase A2 (PLA2) activity and hydrolyzes phosphatidylcholine (PC), a lipid that is hydrolyzed by phospholipase D (PLD) to produce phosphatidic acid (PA). Required to suppress AvrBsT-dependent HR and PLD-dependent production of PA in response to AvrBsT elicitation. This is Carboxylesterase SOBER1 from Arabidopsis thaliana (Mouse-ear cress).